A 327-amino-acid polypeptide reads, in one-letter code: Guanine nucleotide-binding protein subunit beta-like protein 1 (327 aa).

WD repeat units follow at residues 16 to 54, 58 to 97, 103 to 145, 153 to 195, 200 to 237, 242 to 282, and 286 to 323; these read LRGT…IWSL, RAVT…LWDL, AVVD…ILEM, ALKP…LWDV, VCSR…VWSL, ALQV…VFHW, and QPLA…LWSL.

As to expression, ubiquitous. Highly expressed in heart, liver, skeletal muscle, kidney, spleen, thymus and pancreas. Detected at low levels in lung, placenta and brain.

It localises to the cytoplasm. The protein localises to the nucleus. In terms of biological role, acts as a critical regulator of DNA damage response (DDR) signaling via specifically regulating phosphatidylinositol 3-kinase-related protein kinase (PIKK) family proteins. The polypeptide is Guanine nucleotide-binding protein subunit beta-like protein 1 (Homo sapiens (Human)).